A 405-amino-acid chain; its full sequence is Phosphopentomutase (405 aa).

Mn(2+) contacts are provided by D10, D303, H308, D344, H345, and H356.

The protein belongs to the phosphopentomutase family. Mn(2+) is required as a cofactor.

It localises to the cytoplasm. The catalysed reaction is 2-deoxy-alpha-D-ribose 1-phosphate = 2-deoxy-D-ribose 5-phosphate. The enzyme catalyses alpha-D-ribose 1-phosphate = D-ribose 5-phosphate. Its pathway is carbohydrate degradation; 2-deoxy-D-ribose 1-phosphate degradation; D-glyceraldehyde 3-phosphate and acetaldehyde from 2-deoxy-alpha-D-ribose 1-phosphate: step 1/2. Functionally, isomerase that catalyzes the conversion of deoxy-ribose 1-phosphate (dRib-1-P) and ribose 1-phosphate (Rib-1-P) to deoxy-ribose 5-phosphate (dRib-5-P) and ribose 5-phosphate (Rib-5-P), respectively. The chain is Phosphopentomutase from Shewanella frigidimarina (strain NCIMB 400).